The primary structure comprises 238 residues: MDVPLPVEKLSYGSNTEDKTCVVLVATGSFNPPTFMHLRMFELARDELRSKGFHVLGGYMSPVNDAYKKKGLLSAEHRLEMCNVSCQSSDFVMVDPWEASQSNYQRTLTVLSRVKTFLTTNRHVPEESLKVMLLCGSDLLLSFCTPGVWIPEQLRTICKDYGIVCIRREGQDVENMISGDEILNENCANVKIVDNTVPNQISSSRLRQCISRGLSVKYLTEDGVIDYIRQHQLYTELT.

Serine 29 and phenylalanine 30 together coordinate NAD(+). Residues histidine 37 and lysine 70 each contribute to the ATP site. Positions 107, 136, 138, 149, 168, and 199 each coordinate NAD(+). Position 204–205 (204–205 (SR)) interacts with ATP.

This sequence belongs to the eukaryotic NMN adenylyltransferase family. Requires a divalent metal cation as cofactor.

It localises to the nucleus. The enzyme catalyses beta-nicotinamide D-ribonucleotide + ATP + H(+) = diphosphate + NAD(+). It carries out the reaction nicotinate beta-D-ribonucleotide + ATP + H(+) = deamido-NAD(+) + diphosphate. It functions in the pathway cofactor biosynthesis; NAD(+) biosynthesis; deamido-NAD(+) from nicotinate D-ribonucleotide: step 1/1. It participates in cofactor biosynthesis; NAD(+) biosynthesis; NAD(+) from nicotinamide D-ribonucleotide: step 1/1. Catalyzes the formation of NAD(+) from nicotinamide mononucleotide (NMN) and ATP. Can also use the deamidated form; nicotinic acid mononucleotide (NaMN) as substrate. The sequence is that of Nicotinamide/nicotinic acid mononucleotide adenylyltransferase (NMNAT) from Arabidopsis thaliana (Mouse-ear cress).